The sequence spans 363 residues: Fructose-bisphosphate aldolase C (363 aa).

Position 5 is a phosphotyrosine (tyrosine 5). A phosphoserine mark is found at serine 36, serine 39, and serine 45. Arginine 56 contacts substrate. Lysine 111 is modified (N6-acetyllysine). Residue lysine 147 participates in substrate binding. The active-site Proton acceptor is glutamate 188. The active-site Schiff-base intermediate with dihydroxyacetone-P is the lysine 230.

This sequence belongs to the class I fructose-bisphosphate aldolase family. Homotetramer. Interacts with ATP6V1E1. In terms of tissue distribution, expressed exclusively in Purkinje cells in bands running from anterior to posterior across most of the cerebellum. Expressed at higher levels in the brains of BSE-infected animals.

The catalysed reaction is beta-D-fructose 1,6-bisphosphate = D-glyceraldehyde 3-phosphate + dihydroxyacetone phosphate. Its pathway is carbohydrate degradation; glycolysis; D-glyceraldehyde 3-phosphate and glycerone phosphate from D-glucose: step 4/4. The polypeptide is Fructose-bisphosphate aldolase C (Aldoc) (Mus musculus (Mouse)).